Consider the following 211-residue polypeptide: Succinate dehydrogenase subunit 4, mitochondrial (211 aa).

The transit peptide at 1–36 (MASRLLARSKALALALSRADAAAPGPAAGVQWLRTL) directs the protein to the mitochondrion. The segment at 41–64 (RDPAAAASPAPAPRQPAVGSPLGL) is disordered. Heme is bound at residue His-166. Position 179 (Tyr-179) interacts with a ubiquinone. The chain crosses the membrane as a helical span at residues 188–210 (WVFIYFKILLIIMAKETVVYFDL).

As to quaternary structure, component of complex II composed of eight subunits in plants: four classical SDH subunits SDH1, SDH2, SDH3 and SDH4 (a flavoprotein (FP), an iron-sulfur protein (IP), and a cytochrome b composed of a large and a small subunit.), as well as four subunits unknown in mitochondria from bacteria and heterotrophic eukaryotes. The cofactor is heme.

The protein resides in the mitochondrion inner membrane. Its pathway is carbohydrate metabolism; tricarboxylic acid cycle. Its function is as follows. Membrane-anchoring subunit of succinate dehydrogenase (SDH). In Oryza sativa subsp. japonica (Rice), this protein is Succinate dehydrogenase subunit 4, mitochondrial.